Here is a 465-residue protein sequence, read N- to C-terminus: GTPase Der (465 aa).

EngA-type G domains lie at 3 to 167 (PLVA…PEEG) and 179 to 352 (IRIA…ESAN). Residues 9-16 (GRPNVGKS), 57-61 (DTGGI), 119-122 (NKID), 185-192 (GRPNVGKS), 232-236 (DTAGL), and 297-300 (NKWD) contribute to the GTP site. The KH-like domain occupies 353–437 (KTFTTSEVNK…PVSFIFREGT (85 aa)).

This sequence belongs to the TRAFAC class TrmE-Era-EngA-EngB-Septin-like GTPase superfamily. EngA (Der) GTPase family. As to quaternary structure, associates with the 50S ribosomal subunit.

Functionally, GTPase that plays an essential role in the late steps of ribosome biogenesis. This Stenotrophomonas maltophilia (strain R551-3) protein is GTPase Der.